The following is a 401-amino-acid chain: (1R,4R,5S)-(-)-guaia-6,10(14)-diene synthase (401 aa).

Mg(2+)-binding residues include Asp134 and Glu139. Positions 134–138 (DDQFD) match the DDXXD motif motif. Arg242 is a binding site for substrate. Mg(2+)-binding residues include Asn288 and Ser292. Lys295 serves as a coordination point for substrate. A Mg(2+)-binding site is contributed by Asp296. 375–376 (RY) is a substrate binding site.

This sequence belongs to the terpene synthase family. Mg(2+) is required as a cofactor.

The enzyme catalyses (2E,6E)-farnesyl diphosphate = (1R,4R,5S)-(-)-guaia-6,10(14)-diene + diphosphate. The protein operates within secondary metabolite biosynthesis; terpenoid biosynthesis. Functionally, catalyzes the conversion of (2E,6E)-farnesyl diphosphate (FPP) to yield the bicyclic sesquiterpene guaia-6,10(14)-diene via a 1,10-cyclization, which requires the abstraction of the pyrophosphate from FPP to yield the (E,E)-germacradienyl cation. The only accepted substrate is farnesyl diphosphate (FPP). The sequence is that of (1R,4R,5S)-(-)-guaia-6,10(14)-diene synthase from Fusarium mangiferae (Mango malformation disease fungus).